Reading from the N-terminus, the 233-residue chain is Putative T-box protein 41 (233 aa).

The segment at residues 1-146 (MTVTRNGCRI…MNPHARHFLK (146 aa)) is a DNA-binding region (T-box).

The protein localises to the nucleus. This is Putative T-box protein 41 (tbx-41) from Caenorhabditis elegans.